Reading from the N-terminus, the 137-residue chain is Large ribosomal subunit protein uL16c (137 aa).

This sequence belongs to the universal ribosomal protein uL16 family. Part of the 50S ribosomal subunit.

The protein resides in the plastid. Its subcellular location is the chloroplast. The protein is Large ribosomal subunit protein uL16c of Adiantum capillus-veneris (Maidenhair fern).